The primary structure comprises 231 residues: Putative 3-methyladenine DNA glycosylase (231 aa).

The protein belongs to the DNA glycosylase MPG family.

This is Putative 3-methyladenine DNA glycosylase from Pseudomonas fluorescens (strain Pf0-1).